The chain runs to 103 residues: Large ribosomal subunit protein bL21 (103 aa).

This sequence belongs to the bacterial ribosomal protein bL21 family. Part of the 50S ribosomal subunit. Contacts protein L20.

Its function is as follows. This protein binds to 23S rRNA in the presence of protein L20. This Psychrobacter sp. (strain PRwf-1) protein is Large ribosomal subunit protein bL21.